Here is a 229-residue protein sequence, read N- to C-terminus: Multiple organellar RNA editing factor 5, chloroplastic/mitochondrial (229 aa).

A chloroplast and mitochondrion-targeting transit peptide spans 1–57; sequence MAKTLARSTASRITKRLISTSGATTPSPSYILSRRSTPVFSHAVGFISSLNRFTTIR.

Belongs to the MORF family. As to quaternary structure, homodimer and heterodimers with MORF8/RIP1, MORF3/RIP3, MORF6/RIP6, MORF7/RIP7 and MORF9/RIP9.

Its subcellular location is the mitochondrion. It is found in the plastid. The protein resides in the chloroplast. Its function is as follows. Involved in organellar RNA editing. Required for the processing of few RNA editing sites in mitochondria. The sequence is that of Multiple organellar RNA editing factor 5, chloroplastic/mitochondrial from Arabidopsis thaliana (Mouse-ear cress).